The following is a 135-amino-acid chain: Small ribosomal subunit protein uS12 (135 aa).

3-methylthioaspartic acid is present on D89. The disordered stretch occupies residues 103 to 135 (DTAGVKNRMQSRSKYGTKRPKPGQAAAPAGKKR). The segment covering 111 to 123 (MQSRSKYGTKRPK) has biased composition (basic residues). Low complexity predominate over residues 124–135 (PGQAAAPAGKKR).

It belongs to the universal ribosomal protein uS12 family. Part of the 30S ribosomal subunit. Contacts proteins S8 and S17. May interact with IF1 in the 30S initiation complex.

Functionally, with S4 and S5 plays an important role in translational accuracy. Interacts with and stabilizes bases of the 16S rRNA that are involved in tRNA selection in the A site and with the mRNA backbone. Located at the interface of the 30S and 50S subunits, it traverses the body of the 30S subunit contacting proteins on the other side and probably holding the rRNA structure together. The combined cluster of proteins S8, S12 and S17 appears to hold together the shoulder and platform of the 30S subunit. The protein is Small ribosomal subunit protein uS12 of Gloeobacter violaceus (strain ATCC 29082 / PCC 7421).